A 757-amino-acid chain; its full sequence is Voltage-gated potassium channel KCNC3 (757 aa).

The segment at 1–78 (MLSSVCVSSF…CPGLPAAAMG (78 aa)) is important for normal N-type inactivation. Positions 1 to 87 (MLSSVCVSSF…GRHGGGGGDS (87 aa)) are disordered. The Cytoplasmic portion of the chain corresponds to 1–290 (MLSSVCVSSF…EDPYSSRAAR (290 aa)). The span at 21 to 40 (PAPPPQPPESPPPPPLPPQQ) shows a compositional bias: pro residues. A compositionally biased stretch (low complexity) spans 41–52 (QQPAQPGPAASP). Zn(2+)-binding residues include His157, Cys163, Cys184, and Cys185. The span at 210 to 219 (AANAANAAGA) shows a compositional bias: low complexity. Residues 210-232 (AANAANAAGAHDGGLDDEAGAGG) form a disordered region. Residues 291-309 (YVAFASLFFILISITTFCL) traverse the membrane as a helical segment. N-linked (GlcNAc...) asparagine glycosylation is found at Asn320 and Asn336. A helical transmembrane segment spans residues 351-370 (VEGVCVVWFTFEFLMRITFC). The Cytoplasmic segment spans residues 371–379 (PDKVEFLKS). The helical transmembrane segment at 380 to 398 (SLNIIDCVAILPFYLEVGL) threads the bilayer. The helical; Voltage-sensor transmembrane segment at 412-434 (FLRVVRFVRILRIFKLTRHFVGL) threads the bilayer. Over 435-447 (RVLGHTLRASTNE) the chain is Cytoplasmic. A helical transmembrane segment spans residues 448–469 (FLLLIIFLALGVLIFATMIYYA). The N-linked (GlcNAc...) asparagine glycan is linked to Asn483. The K(+) site is built by Thr503, Leu504, Gly505, and Tyr506. Residues 503-508 (TLGYGD) carry the Selectivity filter motif. Residues 518-539 (LVGALCALAGVLTIAMPVPVIV) form a helical membrane-spanning segment. Residues 540-757 (NNFGMYYSLA…NANAAAWISP (218 aa)) are Cytoplasmic-facing. The tract at residues 556 to 613 (PKKKNKHIPRPPQPGSPNYCKPDPPPPPPPHPHHGSGGISPPPPITPPSMGVTVAGAY) is disordered. Omega-N-methylarginine is present on Arg625. The tract at residues 682–746 (QPAMSPEDKS…KPGPPSFLPD (65 aa)) is disordered. A phosphoserine mark is found at Ser686 and Ser691. Residues 728–743 (PPLPPQDWRKPGPPSF) show a composition bias toward pro residues.

The protein belongs to the potassium channel family. C (Shaw) (TC 1.A.1.2) subfamily. Kv3.3/KCNC3 sub-subfamily. Homotetramer. Heterotetramer with KCNC1. Interacts (via C-terminus) with HAX1; this interaction modulates channel gating. Identified in a complex with ACTR3, a subunit of the Arp2/3 complex; this interaction is indirect and depends on the presence of HAX1. In terms of processing, N-glycosylated.

It is found in the cell membrane. The protein localises to the presynaptic cell membrane. It localises to the perikaryon. Its subcellular location is the cell projection. The protein resides in the axon. It is found in the dendrite. The protein localises to the dendritic spine membrane. It localises to the cytoplasm. Its subcellular location is the cell cortex. The protein resides in the cytoskeleton. It catalyses the reaction K(+)(in) = K(+)(out). Voltage-gated potassium channel that plays an important role in the rapid repolarization of fast-firing brain neurons. The channel opens in response to the voltage difference across the membrane, forming a potassium-selective channel through which potassium ions pass in accordance with their electrochemical gradient. The channel displays rapid activation and inactivation kinetics. It plays a role in the regulation of the frequency, shape and duration of action potentials in Purkinje cells. Required for normal survival of cerebellar neurons, probably via its role in regulating the duration and frequency of action potentials that in turn regulate the activity of voltage-gated Ca(2+) channels and cellular Ca(2+) homeostasis. Required for normal motor function. Plays a role in the reorganization of the cortical actin cytoskeleton and the formation of actin veil structures in neuronal growth cones via its interaction with HAX1 and the Arp2/3 complex. The protein is Voltage-gated potassium channel KCNC3 (KCNC3) of Homo sapiens (Human).